The chain runs to 123 residues: MTKEEIIEAIENMTVLELAELVEELEEKFGVSAAAPVAMAAVPGAQGGEQQEEKTEFDVHLAEIGGKKINVIKVVREVTGLGLKDAKALVDDAPTNVKEGVSKEEAEEIKSKLEDAGATVELK.

The tract at residues 98–123 is disordered; the sequence is KEGVSKEEAEEIKSKLEDAGATVELK. A compositionally biased stretch (basic and acidic residues) spans 100–115; that stretch reads GVSKEEAEEIKSKLED.

The protein belongs to the bacterial ribosomal protein bL12 family. In terms of assembly, homodimer. Part of the ribosomal stalk of the 50S ribosomal subunit. Forms a multimeric L10(L12)X complex, where L10 forms an elongated spine to which 2 to 4 L12 dimers bind in a sequential fashion. Binds GTP-bound translation factors.

Forms part of the ribosomal stalk which helps the ribosome interact with GTP-bound translation factors. Is thus essential for accurate translation. This chain is Large ribosomal subunit protein bL12, found in Halothermothrix orenii (strain H 168 / OCM 544 / DSM 9562).